Here is a 151-residue protein sequence, read N- to C-terminus: Probable cyclic pyranopterin monophosphate synthase (151 aa).

Residues 66-68 (MCH) and 102-103 (ME) each bind substrate. The active site involves aspartate 117.

This sequence belongs to the MoaC family. Homohexamer; trimer of dimers.

The catalysed reaction is (8S)-3',8-cyclo-7,8-dihydroguanosine 5'-triphosphate = cyclic pyranopterin phosphate + diphosphate. It functions in the pathway cofactor biosynthesis; molybdopterin biosynthesis. Catalyzes the conversion of (8S)-3',8-cyclo-7,8-dihydroguanosine 5'-triphosphate to cyclic pyranopterin monophosphate (cPMP). The chain is Probable cyclic pyranopterin monophosphate synthase from Sulfurisphaera tokodaii (strain DSM 16993 / JCM 10545 / NBRC 100140 / 7) (Sulfolobus tokodaii).